Reading from the N-terminus, the 169-residue chain is dCTP pyrophosphatase 1 (169 aa).

The segment at 1–26 is disordered; it reads MSASEEMLGGARGESTTATGPFSFSS. Residues 14–26 show a composition bias toward polar residues; it reads ESTTATGPFSFSS. Residues H37 and 46-50 each bind substrate; that span reads WEQFH. 2 residues coordinate Mg(2+): E62 and E65. A substrate-binding site is contributed by W72. S84 carries the phosphoserine modification. Mg(2+)-binding residues include E94 and D97. Y101 serves as a coordination point for substrate. Positions 143 to 169 are disordered; it reads LPHGATSENQAMGPADPASESTGQVST.

Homotetramer. Requires Mg(2+) as cofactor.

Its subcellular location is the cytoplasm. It is found in the cytosol. The enzyme catalyses dCTP + H2O = dCMP + diphosphate + H(+). Its function is as follows. Hydrolyzes deoxynucleoside triphosphates (dNTPs) to the corresponding nucleoside monophosphates. Has a strong preference for dCTP and its analogs including 5-iodo-dCTP and 5-methyl-dCTP for which it may even have a higher efficiency. May protect DNA or RNA against the incorporation of these genotoxic nucleotide analogs through their catabolism. The polypeptide is dCTP pyrophosphatase 1 (Bos taurus (Bovine)).